A 78-amino-acid polypeptide reads, in one-letter code: Large ribosomal subunit protein bL28 (78 aa).

The disordered stretch occupies residues 1–22; sequence MSKVCQVTGKRPTTGNNVSHAN. The segment covering 11–22 has biased composition (polar residues); it reads RPTTGNNVSHAN.

Belongs to the bacterial ribosomal protein bL28 family.

The polypeptide is Large ribosomal subunit protein bL28 (Alkalilimnicola ehrlichii (strain ATCC BAA-1101 / DSM 17681 / MLHE-1)).